The sequence spans 350 residues: MNFNKIKSMHFPSDVYIGHDAILNIGSVVSKFLKSGEVLLITGENTYNIAGKKVLSNLNDFDVNVIIASRATRDSIKSIEESLKNRRSGIVLGVGGGSKIDIAKKIAYDLGIPFISVPTTPSHDGIASPRASIYDGKSVYSEEATMPSAIVADTSIMVLAPYRYVAAGAADVISNITAVLDWKLANRLKGEEFSSTAAVMSEYAGRELIERSSMIQPGLEESIWLVTKQILASGAAMAIAGSSRPASGSEHLFSHAIEILGPGSSIHGEQCAMGSLISMYLHGGDWELLKNTYRKIGLNTRAESYGIGREVAIKALSIAHRIRPSRYTILGESDLSYNVAERILSITGII.

NAD(+) is bound by residues 97–101 and 119–122; these read GSKID and TTPS. Asp-124 contributes to the substrate binding site. Residue Ser-128 participates in NAD(+) binding. Residue Asp-171 coordinates substrate. Zn(2+) contacts are provided by Asp-171 and His-251. Residue His-255 participates in substrate binding. Residue His-267 participates in Zn(2+) binding.

This sequence belongs to the glycerol-1-phosphate dehydrogenase family. It depends on Zn(2+) as a cofactor.

It is found in the cytoplasm. It carries out the reaction sn-glycerol 1-phosphate + NAD(+) = dihydroxyacetone phosphate + NADH + H(+). It catalyses the reaction sn-glycerol 1-phosphate + NADP(+) = dihydroxyacetone phosphate + NADPH + H(+). The protein operates within membrane lipid metabolism; glycerophospholipid metabolism. Functionally, catalyzes the NAD(P)H-dependent reduction of dihydroxyacetonephosphate (DHAP or glycerone phosphate) to glycerol 1-phosphate (G1P). The G1P thus generated is used as the glycerophosphate backbone of phospholipids in the cellular membranes of Archaea. The chain is Glycerol-1-phosphate dehydrogenase [NAD(P)+] from Picrophilus torridus (strain ATCC 700027 / DSM 9790 / JCM 10055 / NBRC 100828 / KAW 2/3).